The primary structure comprises 149 residues: D-aminoacyl-tRNA deacylase (149 aa).

A Gly-cisPro motif, important for rejection of L-amino acids motif is present at residues 137-138; that stretch reads GP.

This sequence belongs to the DTD family. Homodimer.

It is found in the cytoplasm. It catalyses the reaction glycyl-tRNA(Ala) + H2O = tRNA(Ala) + glycine + H(+). The enzyme catalyses a D-aminoacyl-tRNA + H2O = a tRNA + a D-alpha-amino acid + H(+). In terms of biological role, an aminoacyl-tRNA editing enzyme that deacylates mischarged D-aminoacyl-tRNAs. Also deacylates mischarged glycyl-tRNA(Ala), protecting cells against glycine mischarging by AlaRS. Acts via tRNA-based rather than protein-based catalysis; rejects L-amino acids rather than detecting D-amino acids in the active site. By recycling D-aminoacyl-tRNA to D-amino acids and free tRNA molecules, this enzyme counteracts the toxicity associated with the formation of D-aminoacyl-tRNA entities in vivo and helps enforce protein L-homochirality. This is D-aminoacyl-tRNA deacylase from Desulforudis audaxviator (strain MP104C).